The chain runs to 123 residues: Small ribosomal subunit protein uS12 (123 aa).

Aspartate 89 carries the 3-methylthioaspartic acid modification. The segment at 100 to 123 is disordered; it reads GSLDTSGVKDRKQGRSKYGTKRPK. The span at 113-123 shows a compositional bias: basic residues; that stretch reads GRSKYGTKRPK.

Belongs to the universal ribosomal protein uS12 family. In terms of assembly, part of the 30S ribosomal subunit. Contacts proteins S8 and S17. May interact with IF1 in the 30S initiation complex.

In terms of biological role, with S4 and S5 plays an important role in translational accuracy. Its function is as follows. Interacts with and stabilizes bases of the 16S rRNA that are involved in tRNA selection in the A site and with the mRNA backbone. Located at the interface of the 30S and 50S subunits, it traverses the body of the 30S subunit contacting proteins on the other side and probably holding the rRNA structure together. The combined cluster of proteins S8, S12 and S17 appears to hold together the shoulder and platform of the 30S subunit. This is Small ribosomal subunit protein uS12 from Ectopseudomonas mendocina (strain ymp) (Pseudomonas mendocina).